Here is a 435-residue protein sequence, read N- to C-terminus: Trigger factor (435 aa).

One can recognise a PPIase FKBP-type domain in the interval 163–248 (GDFVTFDFKG…VKEIKVKELP (86 aa)).

Belongs to the FKBP-type PPIase family. Tig subfamily.

It is found in the cytoplasm. It carries out the reaction [protein]-peptidylproline (omega=180) = [protein]-peptidylproline (omega=0). Functionally, involved in protein export. Acts as a chaperone by maintaining the newly synthesized protein in an open conformation. Functions as a peptidyl-prolyl cis-trans isomerase. This chain is Trigger factor, found in Geobacter sp. (strain M21).